The primary structure comprises 817 residues: Collagen-like protein 4 (817 aa).

Collagen-like domains follow at residues Gly83–Asp142, Gly145–Asp264, and Gly268–Lys327. 3 disordered regions span residues Asn87–Gly107, Phe120–Asp458, and Ile479–Ile543. N-linked (GlcNAc...) asparagine; by host glycans are attached at residues Asn106 and Asn121. 2 stretches are compositionally biased toward basic and acidic residues: residues Ile126–Gln141 and Gln149–Ile161. The N-linked (GlcNAc...) asparagine; by host glycan is linked to Asn183. Composition is skewed to basic and acidic residues over residues Ile212–Ile224 and Ser233–Thr245. Low complexity predominate over residues Lys246–Ser260. Residues Lys294–Lys341 show a composition bias toward basic and acidic residues. Residues Asn345 and Asn360 are each glycosylated (N-linked (GlcNAc...) asparagine; by host). 2 Collagen-like domains span residues Gly352 to Val411 and Gly430 to Lys489. 3 stretches are compositionally biased toward basic and acidic residues: residues Lys354–Asp368, Ser377–Leu390, and Ser428–Asp458. The span at Ile480–Asn494 shows a compositional bias: low complexity. N-linked (GlcNAc...) asparagine; by host glycosylation occurs at Asn483. Composition is skewed to basic and acidic residues over residues Lys495–Thr504, Ile515–Lys525, and Glu533–Ile543. In terms of domain architecture, Collagen-like 6 spans Thr512 to Ser570. Asn709, Asn712, and Asn715 each carry an N-linked (GlcNAc...) asparagine; by host glycan. Residues Gly757–Gly771 are compositionally biased toward gly residues. Positions Gly757–Gly804 are disordered. N-linked (GlcNAc...) asparagine; by host glycosylation is present at Asn772.

In terms of processing, may be hydroxylated on lysine by the viral-encoded procollagen-lysine,2-oxoglutarate 5-dioxygenase.

The protein localises to the virion. Functionally, may participate in the formation of a layer of cross-linked glycosylated fibrils at the viral surface thus giving it a hairy-like appearance. This Acanthamoeba polyphaga (Amoeba) protein is Collagen-like protein 4.